The sequence spans 75 residues: Cytochrome c oxidase subunit 6C (75 aa).

Residues 1 to 13 (MASSALAKPQMRG) are Mitochondrial matrix-facing. The helical transmembrane segment at 14–54 (LLARRLRIHIVGAFVVSLGVAAFYKYAVAEPRKKAYADFYR) threads the bilayer. The Mitochondrial intermembrane portion of the chain corresponds to 55 to 75 (NYDSVKYFEEMRKAGVFQSVK).

The protein belongs to the cytochrome c oxidase subunit 6c family. Component of the cytochrome c oxidase (complex IV, CIV), a multisubunit enzyme composed of 14 subunits. The complex is composed of a catalytic core of 3 subunits MT-CO1, MT-CO2 and MT-CO3, encoded in the mitochondrial DNA, and 11 supernumerary subunits COX4I, COX5A, COX5B, COX6A, COX6B, COX6C, COX7A, COX7B, COX7C, COX8 and NDUFA4, which are encoded in the nuclear genome. The complex exists as a monomer or a dimer and forms supercomplexes (SCs) in the inner mitochondrial membrane with NADH-ubiquinone oxidoreductase (complex I, CI) and ubiquinol-cytochrome c oxidoreductase (cytochrome b-c1 complex, complex III, CIII), resulting in different assemblies (supercomplex SCI(1)III(2)IV(1) and megacomplex MCI(2)III(2)IV(2)).

The protein localises to the mitochondrion inner membrane. Its pathway is energy metabolism; oxidative phosphorylation. In terms of biological role, component of the cytochrome c oxidase, the last enzyme in the mitochondrial electron transport chain which drives oxidative phosphorylation. The respiratory chain contains 3 multisubunit complexes succinate dehydrogenase (complex II, CII), ubiquinol-cytochrome c oxidoreductase (cytochrome b-c1 complex, complex III, CIII) and cytochrome c oxidase (complex IV, CIV), that cooperate to transfer electrons derived from NADH and succinate to molecular oxygen, creating an electrochemical gradient over the inner membrane that drives transmembrane transport and the ATP synthase. Cytochrome c oxidase is the component of the respiratory chain that catalyzes the reduction of oxygen to water. Electrons originating from reduced cytochrome c in the intermembrane space (IMS) are transferred via the dinuclear copper A center (CU(A)) of subunit 2 and heme A of subunit 1 to the active site in subunit 1, a binuclear center (BNC) formed by heme A3 and copper B (CU(B)). The BNC reduces molecular oxygen to 2 water molecules using 4 electrons from cytochrome c in the IMS and 4 protons from the mitochondrial matrix. The sequence is that of Cytochrome c oxidase subunit 6C (COX6C) from Nycticebus coucang (Slow loris).